The chain runs to 428 residues: tRNA(Ile)-lysidine synthase (428 aa).

Position 28-33 (28-33) interacts with ATP; sequence SGGVDS.

It belongs to the tRNA(Ile)-lysidine synthase family.

The protein resides in the cytoplasm. The catalysed reaction is cytidine(34) in tRNA(Ile2) + L-lysine + ATP = lysidine(34) in tRNA(Ile2) + AMP + diphosphate + H(+). Ligates lysine onto the cytidine present at position 34 of the AUA codon-specific tRNA(Ile) that contains the anticodon CAU, in an ATP-dependent manner. Cytidine is converted to lysidine, thus changing the amino acid specificity of the tRNA from methionine to isoleucine. The polypeptide is tRNA(Ile)-lysidine synthase (Streptococcus pyogenes serotype M18 (strain MGAS8232)).